The following is a 1377-amino-acid chain: DNA-directed RNA polymerase subunit beta (1377 aa).

It belongs to the RNA polymerase beta chain family. As to quaternary structure, the RNAP catalytic core consists of 2 alpha, 1 beta, 1 beta' and 1 omega subunit. When a sigma factor is associated with the core the holoenzyme is formed, which can initiate transcription.

It carries out the reaction RNA(n) + a ribonucleoside 5'-triphosphate = RNA(n+1) + diphosphate. Functionally, DNA-dependent RNA polymerase catalyzes the transcription of DNA into RNA using the four ribonucleoside triphosphates as substrates. The protein is DNA-directed RNA polymerase subunit beta of Brucella melitensis biotype 2 (strain ATCC 23457).